A 334-amino-acid chain; its full sequence is Malate dehydrogenase, cytoplasmic (334 aa).

An N-acetylserine modification is found at serine 2. NAD(+) is bound by residues 11–17 (GAAGQIA) and aspartate 42. Substrate is bound by residues arginine 92 and arginine 98. NAD(+) is bound at residue asparagine 105. Lysine 110 bears the N6-succinyllysine mark. An NAD(+)-binding site is contributed by glutamine 112. 2 positions are modified to N6-acetyllysine: lysine 118 and lysine 121. 129 to 131 (VGN) serves as a coordination point for NAD(+). The substrate site is built by asparagine 131 and arginine 162. Histidine 187 serves as the catalytic Proton acceptor. The residue at position 214 (lysine 214) is an N6-succinyllysine. Serine 217 carries the post-translational modification Phosphoserine. Arginine 230 is subject to Omega-N-methylarginine. Serine 241 is subject to Phosphoserine. Lysine 298 carries the N6-acetyllysine; alternate modification. Lysine 298 carries the post-translational modification N6-succinyllysine; alternate. Serine 309 is modified (phosphoserine). At lysine 318 the chain carries N6-succinyllysine. Phosphoserine occurs at positions 332 and 333.

The protein belongs to the LDH/MDH superfamily. MDH type 2 family. As to quaternary structure, homodimer. Post-translationally, ISGylated. Acetylation at Lys-118 dramatically enhances enzymatic activity and promotes adipogenic differentiation.

It localises to the cytoplasm. The protein localises to the cytosol. The catalysed reaction is (S)-malate + NAD(+) = oxaloacetate + NADH + H(+). The enzyme catalyses (2R)-2-hydroxy-3-(4-hydroxyphenyl)propanoate + NAD(+) = 3-(4-hydroxyphenyl)pyruvate + NADH + H(+). It catalyses the reaction (S)-2-hydroxyglutarate + NAD(+) = 2-oxoglutarate + NADH + H(+). In terms of biological role, catalyzes the reduction of aromatic alpha-keto acids in the presence of NADH. Plays essential roles in the malate-aspartate shuttle and the tricarboxylic acid cycle, important in mitochondrial NADH supply for oxidative phosphorylation. Catalyzes the reduction of 2-oxoglutarate to 2-hydroxyglutarate, leading to elevated reactive oxygen species (ROS). The polypeptide is Malate dehydrogenase, cytoplasmic (Mdh1) (Rattus norvegicus (Rat)).